A 1460-amino-acid chain; its full sequence is Cilia- and flagella-associated protein 43 (1460 aa).

WD repeat units lie at residues 46 to 87 (EGRY…HLQC), 91 to 132 (VATV…RLVK), 184 to 221 (SKGHYFHSCVWGTEGLYCGAGRGQVVLLDELRTDMKNY), 303 to 342 (RRRSASDTVKLLVLGGLVVIVCLDGSLVTYDQDTNTAGHT), 428 to 468 (IFAC…DSAS), 529 to 569 (MRDH…MKLP), 589 to 628 (FGRGGITCLSVWNAAGGFVCGGNDSVVHLVPVGKSPIHYS), 911 to 951 (EIDP…VTEV), and 1129 to 1170 (NRRF…CRAV). Coiled coils occupy residues 1170–1214 (VVEA…AEEA) and 1399–1446 (LGEH…LREA).

This sequence belongs to the CFAP43 family.

The protein resides in the cell projection. The protein localises to the cilium. Its subcellular location is the flagellum. It localises to the cytoplasm. It is found in the cytoskeleton. The protein resides in the flagellum axoneme. Flagellar protein involved in flagellum axoneme organization and function. The protein is Cilia- and flagella-associated protein 43 of Trypanosoma brucei brucei (strain 927/4 GUTat10.1).